Reading from the N-terminus, the 97-residue chain is Venom peptide HsVx1 (97 aa).

The N-terminal stretch at 1–20 (MSHLRIAVTFLCTLFALTAG) is a signal peptide.

Belongs to the scorpion La1-like peptide family. Contains 4 disulfide bonds. In terms of tissue distribution, expressed by the venom gland.

It localises to the secreted. This is Venom peptide HsVx1 from Heterometrus spinifer (Asia giant forest scorpion).